Here is a 282-residue protein sequence, read N- to C-terminus: Putative sugar uptake protein lp_2594 (282 aa).

10 helical membrane passes run 2–21 (IFLIAIIPALCWGINPLLVG), 31–48 (MFGMGIGDGLIALIFWLF), 53–75 (VTISGVTFGLAMISGAAWAIGQL), 90–112 (MPISTALQLVGTSLIGVLMFGEW), 119–136 (ILGLLAIMLIVAGSALSA), 146–163 (FSCYLPLLMTTIGYWIYS), 176–194 (LFLPQMLGILIVAVGWAIY), 209–226 (TLPGILYGIAAFMYILSA), 233–252 (NAYIIGQLSVVISTLSGLFF), and 262–281 (IVSVATGLLFIFMGCVTTAL).

Belongs to the GRP transporter (TC 2.A.7.5) family.

The protein resides in the cell membrane. This is Putative sugar uptake protein lp_2594 from Lactiplantibacillus plantarum (strain ATCC BAA-793 / NCIMB 8826 / WCFS1) (Lactobacillus plantarum).